The primary structure comprises 751 residues: Cyanobacterial phytochrome B (751 aa).

Cys17 contributes to the a tetrapyrrole binding site. The interval Ile22–Gln511 is chromophore binding domain. Residues Thr152–Glu320 enclose the GAF domain. The Histidine kinase domain maps to Ile536–Val751. His539 carries the post-translational modification Phosphohistidine; by autocatalysis.

In the N-terminal section; belongs to the phytochrome family. Post-translationally, contains one covalently linked tetrapyrrole chromophore.

It catalyses the reaction ATP + protein L-histidine = ADP + protein N-phospho-L-histidine.. Photoreceptor which exists in two forms that are reversibly interconvertible by light: the R form that absorbs maximally in the red region of the spectrum and the FR form that absorbs maximally in the far-red region. This is Cyanobacterial phytochrome B (bphB) from Nostoc sp. (strain PCC 7120 / SAG 25.82 / UTEX 2576).